We begin with the raw amino-acid sequence, 236 residues long: Orotidine 5'-phosphate decarboxylase (236 aa).

Residues Asp-16, Lys-38, 65-74 (DLKLHDIGNT), Thr-123, Arg-184, Gln-193, Gly-213, and Arg-214 each bind substrate. The Proton donor role is filled by Lys-67.

Belongs to the OMP decarboxylase family. Type 1 subfamily. As to quaternary structure, homodimer.

The enzyme catalyses orotidine 5'-phosphate + H(+) = UMP + CO2. Its pathway is pyrimidine metabolism; UMP biosynthesis via de novo pathway; UMP from orotate: step 2/2. Functionally, catalyzes the decarboxylation of orotidine 5'-monophosphate (OMP) to uridine 5'-monophosphate (UMP). This chain is Orotidine 5'-phosphate decarboxylase, found in Methylobacterium nodulans (strain LMG 21967 / CNCM I-2342 / ORS 2060).